A 216-amino-acid chain; its full sequence is 3-isopropylmalate dehydratase small subunit (216 aa).

Belongs to the LeuD family. LeuD type 1 subfamily. Heterodimer of LeuC and LeuD.

It carries out the reaction (2R,3S)-3-isopropylmalate = (2S)-2-isopropylmalate. It participates in amino-acid biosynthesis; L-leucine biosynthesis; L-leucine from 3-methyl-2-oxobutanoate: step 2/4. In terms of biological role, catalyzes the isomerization between 2-isopropylmalate and 3-isopropylmalate, via the formation of 2-isopropylmaleate. This is 3-isopropylmalate dehydratase small subunit from Bordetella avium (strain 197N).